Consider the following 169-residue polypeptide: Putative phosphoesterase SE_0715 (169 aa).

The active-site Proton donor is His-34. Short sequence motifs (HXTX) lie at residues 34–37 (HITI) and 115–118 (HFTI). His-115 (proton acceptor) is an active-site residue.

The protein belongs to the 2H phosphoesterase superfamily. YjcG family.

The protein is Putative phosphoesterase SE_0715 of Staphylococcus epidermidis (strain ATCC 12228 / FDA PCI 1200).